We begin with the raw amino-acid sequence, 289 residues long: 5'-adenylylsulfate reductase-like 7 (289 aa).

The first 23 residues, 1-23, serve as a signal peptide directing secretion; that stretch reads MNLWVSIFLVSAIAGSCLPSGFA. Residues 37-157 form the Thioredoxin domain; the sequence is SVIEQKCPRS…LIQFYKETTG (121 aa). 2 N-linked (GlcNAc...) asparagine glycosylation sites follow: Asn-132 and Asn-184. A helical membrane pass occupies residues 198-218; it reads MVLALMFLSLKLAILIFPIMG.

The protein localises to the membrane. In Arabidopsis thaliana (Mouse-ear cress), this protein is 5'-adenylylsulfate reductase-like 7 (APRL7).